Consider the following 758-residue polypeptide: Probable serine/threonine-protein kinase HAL5-like (758 aa).

Disordered regions lie at residues 1 to 170 and 189 to 252; these read MGTV…SADD and IDNA…HRGR. Over residues 22–57 the composition is skewed to polar residues; it reads RSISGSIKSLFKPSSVQNSTPTVSPHESSPPLGNSD. Positions 58 to 69 are enriched in basic and acidic residues; the sequence is NLKKLVDTKRAE. The segment covering 129–153 has biased composition (low complexity); the sequence is SSPRQSSSTNDRSSITSATSSVTSA. Positions 216–226 are enriched in basic and acidic residues; it reads DKNFESSEYEI. A compositionally biased stretch (polar residues) spans 227 to 247; sequence RSNSLSRIHSTPQNESPTVNN. The 303-residue stretch at 442–744 folds into the Protein kinase domain; the sequence is KSMGVVLGHG…IDQLLQSPWM (303 aa). Residues 448–456 and Lys485 contribute to the ATP site; that span reads LGHGAYGVV. Asp595 acts as the Proton acceptor in catalysis.

The protein belongs to the protein kinase superfamily. CAMK Ser/Thr protein kinase family. NPR/HAL subfamily. HAL5 sub-subfamily.

The catalysed reaction is L-seryl-[protein] + ATP = O-phospho-L-seryl-[protein] + ADP + H(+). It catalyses the reaction L-threonyl-[protein] + ATP = O-phospho-L-threonyl-[protein] + ADP + H(+). The sequence is that of Probable serine/threonine-protein kinase HAL5-like from Vanderwaltozyma polyspora (strain ATCC 22028 / DSM 70294 / BCRC 21397 / CBS 2163 / NBRC 10782 / NRRL Y-8283 / UCD 57-17) (Kluyveromyces polysporus).